A 185-amino-acid polypeptide reads, in one-letter code: GTP cyclohydrolase 1 (185 aa).

Zn(2+)-binding residues include cysteine 76, histidine 79, and cysteine 147.

This sequence belongs to the GTP cyclohydrolase I family. In terms of assembly, toroid-shaped homodecamer, composed of two pentamers of five dimers.

It carries out the reaction GTP + H2O = 7,8-dihydroneopterin 3'-triphosphate + formate + H(+). It functions in the pathway cofactor biosynthesis; 7,8-dihydroneopterin triphosphate biosynthesis; 7,8-dihydroneopterin triphosphate from GTP: step 1/1. In Clostridium perfringens (strain ATCC 13124 / DSM 756 / JCM 1290 / NCIMB 6125 / NCTC 8237 / Type A), this protein is GTP cyclohydrolase 1.